The following is a 136-amino-acid chain: MNSQVKNKAVYWGTGRRKTSVARVRLIPGNGQIKINGRSGDDYLNFNPSHLNSVKAPLLTLGLENSYDIFVNVFGGGLTGQADAIKQGAARALCGLSPDNRKPLKTEGHLSRDPRSKERKKYGLKKARKAGQFSKR.

The segment at 95–136 (GLSPDNRKPLKTEGHLSRDPRSKERKKYGLKKARKAGQFSKR) is disordered. A compositionally biased stretch (basic and acidic residues) spans 99-116 (DNRKPLKTEGHLSRDPRS). A compositionally biased stretch (basic residues) spans 117-136 (KERKKYGLKKARKAGQFSKR).

This sequence belongs to the universal ribosomal protein uS9 family.

The protein is Small ribosomal subunit protein uS9 of Prochlorococcus marinus subsp. pastoris (strain CCMP1986 / NIES-2087 / MED4).